Here is a 476-residue protein sequence, read N- to C-terminus: Serine/threonine-protein kinase PBL36 (476 aa).

The Protein kinase domain occupies 126 to 412; the sequence is FRPESLLGEG…VEALKPLPNL (287 aa). ATP-binding positions include 132–140 and K164; that span reads LGEGGFGCV. Y209 is subject to Phosphotyrosine. The active-site Proton acceptor is D259. A phosphoserine mark is found at S263 and S293. Phosphothreonine occurs at positions 294 and 299. Y307 is subject to Phosphotyrosine. Residues 431–476 are disordered; that stretch reads NGVRTQGGGFVSRNGPPMRSLSSLNLPQASPYRYARQSPKPKGKEP.

The protein belongs to the protein kinase superfamily. Ser/Thr protein kinase family. As to quaternary structure, interacts with SD129. In terms of processing, phosphorylated by SD129 in response to the pathogen-associated molecular pattern (PAMP) 3-OH-C10:0, a medium-chain 3-hydroxy fatty acid.

The protein resides in the cell membrane. It carries out the reaction L-seryl-[protein] + ATP = O-phospho-L-seryl-[protein] + ADP + H(+). The enzyme catalyses L-threonyl-[protein] + ATP = O-phospho-L-threonyl-[protein] + ADP + H(+). Functionally, involved in chitin-triggered immune signaling and is required for reactive oxygen species (ROS) production. Acts downstream of SD129 in defense signaling triggered by the pathogen-associated molecular pattern (PAMP) 3-OH-C10:0, a medium-chain 3-hydroxy fatty acid. This Arabidopsis thaliana (Mouse-ear cress) protein is Serine/threonine-protein kinase PBL36.